The chain runs to 62 residues: Short neurotoxin 1 (62 aa).

Over residues 1 to 17 (MQCCNQQSSQPKTTTTC) the composition is skewed to polar residues. The interval 1–20 (MQCCNQQSSQPKTTTTCPGG) is disordered. Disulfide bonds link C3–C24, C17–C41, C43–C54, and C55–C60.

This sequence belongs to the three-finger toxin family. Short-chain subfamily. Type I alpha-neurotoxin sub-subfamily. In terms of tissue distribution, expressed by the venom gland.

It localises to the secreted. Its function is as follows. Binds to muscle nicotinic acetylcholine receptor (nAChR) and inhibit acetylcholine from binding to the receptor, thereby impairing neuromuscular transmission. This Acanthophis antarcticus (Common death adder) protein is Short neurotoxin 1.